The sequence spans 320 residues: Ferrochelatase (320 aa).

Residues His-194 and Glu-275 each coordinate Fe cation.

The protein belongs to the ferrochelatase family.

It is found in the cytoplasm. It catalyses the reaction heme b + 2 H(+) = protoporphyrin IX + Fe(2+). Its pathway is porphyrin-containing compound metabolism; protoheme biosynthesis; protoheme from protoporphyrin-IX: step 1/1. Catalyzes the ferrous insertion into protoporphyrin IX. The polypeptide is Ferrochelatase (Cronobacter sakazakii (strain ATCC BAA-894) (Enterobacter sakazakii)).